The chain runs to 241 residues: Ribose-5-phosphate isomerase A (241 aa).

Residues 28–31 (TGST), 83–86 (DGAD), and 96–99 (KGGG) each bind substrate. Glu105 (proton acceptor) is an active-site residue. Lys123 serves as a coordination point for substrate.

Belongs to the ribose 5-phosphate isomerase family. Homodimer.

The enzyme catalyses aldehydo-D-ribose 5-phosphate = D-ribulose 5-phosphate. It participates in carbohydrate degradation; pentose phosphate pathway; D-ribose 5-phosphate from D-ribulose 5-phosphate (non-oxidative stage): step 1/1. Catalyzes the reversible conversion of ribose-5-phosphate to ribulose 5-phosphate. The protein is Ribose-5-phosphate isomerase A of Bradyrhizobium diazoefficiens (strain JCM 10833 / BCRC 13528 / IAM 13628 / NBRC 14792 / USDA 110).